We begin with the raw amino-acid sequence, 97 residues long: Large ribosomal subunit protein bL31 (97 aa).

Positions 75–97 (NKTKKSNQAKVEKQTRHRSINEL) are disordered. The segment covering 84–97 (KVEKQTRHRSINEL) has biased composition (basic and acidic residues).

This sequence belongs to the bacterial ribosomal protein bL31 family. Type A subfamily. Part of the 50S ribosomal subunit.

Binds the 23S rRNA. The sequence is that of Large ribosomal subunit protein bL31 from Mycoplasma genitalium (strain ATCC 33530 / DSM 19775 / NCTC 10195 / G37) (Mycoplasmoides genitalium).